We begin with the raw amino-acid sequence, 86 residues long: Small ribosomal subunit protein uS17 (86 aa).

The protein belongs to the universal ribosomal protein uS17 family. In terms of assembly, part of the 30S ribosomal subunit.

Functionally, one of the primary rRNA binding proteins, it binds specifically to the 5'-end of 16S ribosomal RNA. The chain is Small ribosomal subunit protein uS17 from Desulfitobacterium hafniense (strain DSM 10664 / DCB-2).